Consider the following 269-residue polypeptide: Mitochondrial scaffolding protein 1 (269 aa).

A PDZ domain is found at 49 to 121 (VVEIEKTSKG…HDEAVEVFRS (73 aa)). The interval 143-185 (RTQTPTASVSITPQVTPQTRSTQNNTDTPKSMSHSESKSRLTS) is disordered. The span at 145–174 (QTPTASVSITPQVTPQTRSTQNNTDTPKSM) shows a compositional bias: polar residues. The helical transmembrane segment at 240 to 262 (WLTEALYVSIGLGALTISGYLAY) threads the bilayer.

It is found in the membrane. Functionally, plays a role in the regulation of lifespan in a partially daf-16-mediated manner, and may be involved in regulating the levels of reactive oxygen species production in response to heat stress. This is Mitochondrial scaffolding protein 1 from Caenorhabditis elegans.